The following is a 221-amino-acid chain: Protein-L-isoaspartate O-methyltransferase (221 aa).

Ser68 is a catalytic residue.

It belongs to the methyltransferase superfamily. L-isoaspartyl/D-aspartyl protein methyltransferase family.

It is found in the cytoplasm. The enzyme catalyses [protein]-L-isoaspartate + S-adenosyl-L-methionine = [protein]-L-isoaspartate alpha-methyl ester + S-adenosyl-L-homocysteine. In terms of biological role, catalyzes the methyl esterification of L-isoaspartyl residues in peptides and proteins that result from spontaneous decomposition of normal L-aspartyl and L-asparaginyl residues. It plays a role in the repair and/or degradation of damaged proteins. The polypeptide is Protein-L-isoaspartate O-methyltransferase (Desulfosudis oleivorans (strain DSM 6200 / JCM 39069 / Hxd3) (Desulfococcus oleovorans)).